The following is a 201-amino-acid chain: dTTP/UTP pyrophosphatase (201 aa).

Asp76 serves as the catalytic Proton acceptor.

Belongs to the Maf family. YhdE subfamily. It depends on a divalent metal cation as a cofactor.

Its subcellular location is the cytoplasm. The enzyme catalyses dTTP + H2O = dTMP + diphosphate + H(+). The catalysed reaction is UTP + H2O = UMP + diphosphate + H(+). Functionally, nucleoside triphosphate pyrophosphatase that hydrolyzes dTTP and UTP. May have a dual role in cell division arrest and in preventing the incorporation of modified nucleotides into cellular nucleic acids. The chain is dTTP/UTP pyrophosphatase from Neisseria meningitidis serogroup A / serotype 4A (strain DSM 15465 / Z2491).